Reading from the N-terminus, the 230-residue chain is Large ribosomal subunit protein uL1 (230 aa).

Belongs to the universal ribosomal protein uL1 family. Part of the 50S ribosomal subunit.

Binds directly to 23S rRNA. The L1 stalk is quite mobile in the ribosome, and is involved in E site tRNA release. In terms of biological role, protein L1 is also a translational repressor protein, it controls the translation of the L11 operon by binding to its mRNA. This Metamycoplasma arthritidis (strain 158L3-1) (Mycoplasma arthritidis) protein is Large ribosomal subunit protein uL1.